The primary structure comprises 274 residues: Diaminopimelate epimerase (274 aa).

Substrate is bound by residues N11, Q44, and N64. The Proton donor role is filled by C73. Residues 74-75, N157, N190, and 208-209 each bind substrate; these read GN and ER. C217 serves as the catalytic Proton acceptor. 218-219 lines the substrate pocket; sequence GT.

Belongs to the diaminopimelate epimerase family. As to quaternary structure, homodimer.

It is found in the cytoplasm. It carries out the reaction (2S,6S)-2,6-diaminopimelate = meso-2,6-diaminopimelate. It functions in the pathway amino-acid biosynthesis; L-lysine biosynthesis via DAP pathway; DL-2,6-diaminopimelate from LL-2,6-diaminopimelate: step 1/1. In terms of biological role, catalyzes the stereoinversion of LL-2,6-diaminopimelate (L,L-DAP) to meso-diaminopimelate (meso-DAP), a precursor of L-lysine and an essential component of the bacterial peptidoglycan. The chain is Diaminopimelate epimerase from Blochmanniella pennsylvanica (strain BPEN).